Here is a 113-residue protein sequence, read N- to C-terminus: FK506-binding protein 1B (113 aa).

Positions 19-113 (GQTVVIEYTG…IFDVYLKGLQ (95 aa)) constitute a PPIase FKBP-type domain.

This sequence belongs to the FKBP-type PPIase family. FKBP1 subfamily.

The protein localises to the cytoplasm. It carries out the reaction [protein]-peptidylproline (omega=180) = [protein]-peptidylproline (omega=0). With respect to regulation, inhibited by both FK506 and rapamycin. PPIases accelerate the folding of proteins. It catalyzes the cis-trans isomerization of proline imidic peptide bonds in oligopeptides. The protein is FK506-binding protein 1B (fkr-3) of Neurospora crassa (strain ATCC 24698 / 74-OR23-1A / CBS 708.71 / DSM 1257 / FGSC 987).